Reading from the N-terminus, the 896-residue chain is C-type lectin domain-containing protein 180 (896 aa).

A signal peptide spans 1–18; it reads MRHLIFTGFVLTLTALEA. The C-type lectin domain occupies 54 to 178; that stretch reads PWGDLYQFRA…CESTSPDHHA (125 aa). Residue Asn-133 is glycosylated (N-linked (GlcNAc...) asparagine). A disulfide bridge links Cys-154 with Cys-169. Asn-221 and Asn-235 each carry an N-linked (GlcNAc...) asparagine glycan. Disordered regions lie at residues 243–264, 354–436, 492–519, and 557–809; these read STVKFSDSEEETSSEEEESVSK, VKQE…LAPE, EKLENSKKSEEEKEELAKKDQMSTEEQK, and KVKA…TTKP. The span at 250–260 shows a compositional bias: acidic residues; it reads SEEETSSEEEE. 2 stretches are compositionally biased toward basic and acidic residues: residues 354-382 and 395-406; these read VKQEKTDEKKVEDKKETLANELNDNKISE and DMPKADIEPPKE. The span at 407 to 426 shows a compositional bias: acidic residues; it reads EDCDEEGSGSGSGEEDEKDE. Basic and acidic residues predominate over residues 427–436; sequence SSEKIELAPE. 3 stretches are compositionally biased toward basic and acidic residues: residues 575-590, 607-663, and 683-692; these read KSAKEGKAEIKEKVGN, QNRE…ETKL, and EEPKSDKDSE. Residues 727 to 739 show a composition bias toward low complexity; that stretch reads STTTESTTVAVKE. Residues 740–768 are compositionally biased toward basic and acidic residues; sequence VPVDEIEKIAKLEAKQHTEDEKVTVETKQ. Positions 773 to 809 are enriched in low complexity; sequence TPAPTTSEKTSTTAAPSTKPAEETTTTTEAPSTTTKP.

It is found in the secreted. The chain is C-type lectin domain-containing protein 180 (clec-180) from Caenorhabditis elegans.